A 378-amino-acid chain; its full sequence is Chaperone protein DnaJ (378 aa).

One can recognise a J domain in the interval 5 to 70 (DYYEVLGVGR…NKKAAYDQFG (66 aa)). A CR-type zinc finger spans residues 134–212 (GLTKELRIPT…CHGDGRVEKT (79 aa)). Residues cysteine 147, cysteine 150, cysteine 164, cysteine 167, cysteine 186, cysteine 189, cysteine 200, and cysteine 203 each coordinate Zn(2+). CXXCXGXG motif repeat units lie at residues 147-154 (CDVCDGSG), 164-171 (CTTCHGQG), 186-193 (CPTCHGRG), and 200-207 (CAKCHGDG).

It belongs to the DnaJ family. As to quaternary structure, homodimer. Zn(2+) serves as cofactor.

Its subcellular location is the cytoplasm. In terms of biological role, participates actively in the response to hyperosmotic and heat shock by preventing the aggregation of stress-denatured proteins and by disaggregating proteins, also in an autonomous, DnaK-independent fashion. Unfolded proteins bind initially to DnaJ; upon interaction with the DnaJ-bound protein, DnaK hydrolyzes its bound ATP, resulting in the formation of a stable complex. GrpE releases ADP from DnaK; ATP binding to DnaK triggers the release of the substrate protein, thus completing the reaction cycle. Several rounds of ATP-dependent interactions between DnaJ, DnaK and GrpE are required for fully efficient folding. Also involved, together with DnaK and GrpE, in the DNA replication of plasmids through activation of initiation proteins. The polypeptide is Chaperone protein DnaJ (Shewanella oneidensis (strain ATCC 700550 / JCM 31522 / CIP 106686 / LMG 19005 / NCIMB 14063 / MR-1)).